Consider the following 377-residue polypeptide: Nitric oxide reductase FlRd-NAD(+) reductase (377 aa).

The protein belongs to the FAD-dependent oxidoreductase family. FAD is required as a cofactor.

The protein localises to the cytoplasm. It catalyses the reaction 2 reduced [nitric oxide reductase rubredoxin domain] + NAD(+) + H(+) = 2 oxidized [nitric oxide reductase rubredoxin domain] + NADH. Its pathway is nitrogen metabolism; nitric oxide reduction. One of at least two accessory proteins for anaerobic nitric oxide (NO) reductase. Reduces the rubredoxin moiety of NO reductase. In Salmonella paratyphi C (strain RKS4594), this protein is Nitric oxide reductase FlRd-NAD(+) reductase.